The following is a 384-amino-acid chain: N-acetyldiaminopimelate deacetylase (384 aa).

Residue aspartate 75 is part of the active site. Glutamate 134 (proton acceptor) is an active-site residue.

The protein belongs to the peptidase M20A family. N-acetyldiaminopimelate deacetylase subfamily.

The enzyme catalyses N-acetyl-(2S,6S)-2,6-diaminopimelate + H2O = (2S,6S)-2,6-diaminopimelate + acetate. The protein operates within amino-acid biosynthesis; L-lysine biosynthesis via DAP pathway; LL-2,6-diaminopimelate from (S)-tetrahydrodipicolinate (acetylase route): step 3/3. Catalyzes the conversion of N-acetyl-diaminopimelate to diaminopimelate and acetate. The protein is N-acetyldiaminopimelate deacetylase of Lactobacillus helveticus (strain DPC 4571).